The chain runs to 181 residues: Ribosome maturation factor RimP (181 aa).

Belongs to the RimP family.

The protein localises to the cytoplasm. Functionally, required for maturation of 30S ribosomal subunits. This is Ribosome maturation factor RimP from Mycolicibacterium smegmatis (strain ATCC 700084 / mc(2)155) (Mycobacterium smegmatis).